We begin with the raw amino-acid sequence, 204 residues long: 3,4-dihydroxy-2-butanone 4-phosphate synthase (204 aa).

Position 30 (Glu30) interacts with Mg(2+). Asp34 is a binding site for D-ribulose 5-phosphate. An S-glutathionyl cysteine modification is found at Cys59. Residues Thr85 and Arg142 to Thr146 contribute to the D-ribulose 5-phosphate site. His145 contacts Mg(2+).

In terms of assembly, homodimer. Mg(2+) is required as a cofactor. The cofactor is Mn(2+). Post-translationally, S-glutathionylation is reversible and dependent on a glutaredoxin.

It catalyses the reaction D-ribulose 5-phosphate = (2S)-2-hydroxy-3-oxobutyl phosphate + formate + H(+). It functions in the pathway cofactor biosynthesis; riboflavin biosynthesis; 2-hydroxy-3-oxobutyl phosphate from D-ribulose 5-phosphate: step 1/1. Catalyzes the conversion of D-ribulose 5-phosphate to formate and 3,4-dihydroxy-2-butanone 4-phosphate. The chain is 3,4-dihydroxy-2-butanone 4-phosphate synthase (RIB3) from Candida albicans (strain SC5314 / ATCC MYA-2876) (Yeast).